A 464-amino-acid chain; its full sequence is ATP-dependent protease ATPase subunit HslU (464 aa).

ATP-binding positions include Ile-22, 64–69 (GVGKTE), Asp-275, Glu-340, and Arg-412.

Belongs to the ClpX chaperone family. HslU subfamily. In terms of assembly, a double ring-shaped homohexamer of HslV is capped on each side by a ring-shaped HslU homohexamer. The assembly of the HslU/HslV complex is dependent on binding of ATP.

It localises to the cytoplasm. Functionally, ATPase subunit of a proteasome-like degradation complex; this subunit has chaperone activity. The binding of ATP and its subsequent hydrolysis by HslU are essential for unfolding of protein substrates subsequently hydrolyzed by HslV. HslU recognizes the N-terminal part of its protein substrates and unfolds these before they are guided to HslV for hydrolysis. This is ATP-dependent protease ATPase subunit HslU from Cytophaga hutchinsonii (strain ATCC 33406 / DSM 1761 / CIP 103989 / NBRC 15051 / NCIMB 9469 / D465).